A 157-amino-acid chain; its full sequence is SsrA-binding protein (157 aa).

Over residues Ala-138 to Arg-151 the composition is skewed to basic and acidic residues. The segment at Ala-138–Ser-157 is disordered.

This sequence belongs to the SmpB family.

The protein localises to the cytoplasm. Its function is as follows. Required for rescue of stalled ribosomes mediated by trans-translation. Binds to transfer-messenger RNA (tmRNA), required for stable association of tmRNA with ribosomes. tmRNA and SmpB together mimic tRNA shape, replacing the anticodon stem-loop with SmpB. tmRNA is encoded by the ssrA gene; the 2 termini fold to resemble tRNA(Ala) and it encodes a 'tag peptide', a short internal open reading frame. During trans-translation Ala-aminoacylated tmRNA acts like a tRNA, entering the A-site of stalled ribosomes, displacing the stalled mRNA. The ribosome then switches to translate the ORF on the tmRNA; the nascent peptide is terminated with the 'tag peptide' encoded by the tmRNA and targeted for degradation. The ribosome is freed to recommence translation, which seems to be the essential function of trans-translation. The sequence is that of SsrA-binding protein from Cereibacter sphaeroides (strain ATCC 17025 / ATH 2.4.3) (Rhodobacter sphaeroides).